We begin with the raw amino-acid sequence, 543 residues long: T-complex protein 1 subunit eta (543 aa).

An N-acetylmethionine modification is found at Met-1. An ADP-binding site is contributed by Gly-41. An ATP-binding site is contributed by Gly-41. Lys-67 bears the N6-acetyllysine mark. Asp-92 serves as a coordination point for Mg(2+). Gly-93, Thr-94, Thr-95, Ser-96, Ser-164, and Ser-165 together coordinate ADP. Gly-93 serves as a coordination point for ATP. Ser-96 is an ATP binding site. Residues Lys-250 and Lys-320 each carry the N6-acetyllysine modification. ATP-binding residues include Arg-398 and Gly-409. Gly-409 is an ADP binding site. Lys-430 is covalently cross-linked (Glycyl lysine isopeptide (Lys-Gly) (interchain with G-Cter in SUMO2)). ADP contacts are provided by Glu-494 and Arg-499. Arg-499 lines the ATP pocket. Arg-535 carries the omega-N-methylarginine modification.

This sequence belongs to the TCP-1 chaperonin family. As to quaternary structure, component of the chaperonin-containing T-complex (TRiC), a hexadecamer composed of two identical back-to-back stacked rings enclosing a protein folding chamber. Each ring is made up of eight different subunits: TCP1/CCT1, CCT2, CCT3, CCT4, CCT5, CCT6A/CCT6, CCT7, CCT8. Interacts with PACRG. Interacts with DLEC1.

It is found in the cytoplasm. The catalysed reaction is ATP + H2O = ADP + phosphate + H(+). Functionally, component of the chaperonin-containing T-complex (TRiC), a molecular chaperone complex that assists the folding of actin, tubulin and other proteins upon ATP hydrolysis. The TRiC complex mediates the folding of WRAP53/TCAB1, thereby regulating telomere maintenance. The chain is T-complex protein 1 subunit eta (CCT7) from Pongo abelii (Sumatran orangutan).